We begin with the raw amino-acid sequence, 458 residues long: Exodeoxyribonuclease 7 large subunit (458 aa).

Belongs to the XseA family. In terms of assembly, heterooligomer composed of large and small subunits.

It localises to the cytoplasm. It catalyses the reaction Exonucleolytic cleavage in either 5'- to 3'- or 3'- to 5'-direction to yield nucleoside 5'-phosphates.. Bidirectionally degrades single-stranded DNA into large acid-insoluble oligonucleotides, which are then degraded further into small acid-soluble oligonucleotides. The chain is Exodeoxyribonuclease 7 large subunit from Geobacter sp. (strain M21).